A 364-amino-acid polypeptide reads, in one-letter code: MFVARSIAADHKDLIHDVSYDFHGRRMATCSSDQSVKVWDKSDNGEWNCTASWKTHSGSVWRVTWAHPEFGQVLASCSFDRTAAVWEEIVGESNDKQRGLSHWIKRTTLVDSRTSVTDVKFAPKHMGLMLTTCSADGVVRIYEAPDVMNLSQWSLQHEISCKLSCSCISWNPSSSRAHSPMIAVGSDDSNTAYSGKVQIYEYVENTRKYAKVETLMTVTDPVHDIAFAPNLGRSFHVLAIATKDVRIFKLIPMRKESSSSGPTKLEVQLQAQFDGHNSQVWRVSWNITSTLLASSGDDGCVRLWKANYMDNWKCTGILRGDGSPVNGAAGQAGTPGAAGTPGGPASQNALQAVAGRKKAQLMPG.

6 WD repeats span residues 10–49 (DHKD…EWNC), 55–96 (THSG…SNDK), 111–152 (DSRT…NLSQ), 160–210 (SCKL…RKYA), 217–258 (TVTD…KESS), and 275–314 (GHNS…NWKC). A disordered region spans residues 326 to 364 (NGAAGQAGTPGAAGTPGGPASQNALQAVAGRKKAQLMPG). The segment covering 327-338 (GAAGQAGTPGAA) has biased composition (low complexity). Residues 355–364 (GRKKAQLMPG) show a composition bias toward basic residues.

The protein belongs to the WD repeat SEC13 family. As to quaternary structure, component of the Nup107-160 subcomplex of the nuclear pore complex (NPC). The Nup107-160 subcomplex includes NUP160, NUP133, NUP107, NUP98, NUP85, NUP43, NUP37, SEH1 and SEC13. Component of the GATOR2 subcomplex, composed of MIOS, SEC13, SEH1L, WDR24 and WDR59. The GATOR2 complex interacts with CASTOR1 and CASTOR2; the interaction is negatively regulated by arginine. The GATOR2 complex interacts with SESN1, SESN2 and SESN3; the interaction is negatively regulated by amino acids.

The protein localises to the chromosome. It localises to the centromere. It is found in the kinetochore. Its subcellular location is the nucleus. The protein resides in the nuclear pore complex. The protein localises to the lysosome membrane. The GATOR2 complex is negatively regulated by the upstream amino acid sensors CASTOR1 and SESN2, which sequester the GATOR2 complex in absence of amino acids. In the presence of abundant amino acids, GATOR2 is released from CASTOR1 and SESN2 and activated. Functionally, component of the Nup107-160 subcomplex of the nuclear pore complex (NPC). The Nup107-160 subcomplex is required for the assembly of a functional NPC. The Nup107-160 subcomplex is also required for normal kinetochore microtubule attachment, mitotic progression and chromosome segregation. This subunit plays a role in recruitment of the Nup107-160 subcomplex to the kinetochore. As a component of the GATOR2 complex, functions as an activator of the amino acid-sensing branch of the mTORC1 signaling pathway. The GATOR2 complex indirectly activates mTORC1 through the inhibition of the GATOR1 subcomplex. GATOR2 probably acts as an E3 ubiquitin-protein ligase toward GATOR1. In the presence of abundant amino acids, the GATOR2 complex mediates ubiquitination of the NPRL2 core component of the GATOR1 complex, leading to GATOR1 inactivation. In the absence of amino acids, GATOR2 is inhibited, activating the GATOR1 complex. The protein is Nucleoporin SEH1 (seh1l) of Osmerus mordax (Rainbow smelt).